A 420-amino-acid chain; its full sequence is FAD-dependent monooxygenase ntnJ (420 aa).

A helical transmembrane segment spans residues 12 to 31; the sequence is FRVIVVGAGIGGLSAAVALA. FAD-binding residues include Glu41 and Ala54. Residue Asn124 is glycosylated (N-linked (GlcNAc...) asparagine). Arg187 is an active-site residue. N-linked (GlcNAc...) asparagine glycosylation occurs at Asn264. 2 residues coordinate FAD: Asp302 and Val315.

This sequence belongs to the paxM FAD-dependent monooxygenase family. FAD is required as a cofactor.

The protein localises to the membrane. The protein operates within secondary metabolite biosynthesis; terpenoid biosynthesis. In terms of biological role, FAD-dependent monooxygenase; part of the gene cluster that mediates the biosynthesis of the meroterpenoids nectripenoids A and B, as well as cochliquninone D and isocochliquninone E. The pathway probably begins with the HR-PKS ntnH that catalyzes two chain-extension steps to form a reduced triketide, which then primes the SAT domain in the NR-PKS ntnG to initiate three more cycles of extension to give a linear hexaketide corresponding to the polyketide part of nectripenoids. The FAD-dependent monooxygenase ntnJ then performs an oxidative decarboxylation at C11 of the ntnH/ntnG product, via an electrophilic aromatic hydroxylation with concomitant ipso-decarboxylation. The membrane-bound polyprenyl transferase ntnF then introduces a farnesyl group before the FAD-dependent monooxygenase ntnK functions as the first epoxidase on terminal C12'-C13' olefin, followed by a second epoxidation on C7'-C8' catalyzed by ntnA. The terpene cyclase/mutase ntnI then initiates the sequential tricyclic ring formation through protonation of the terminal epoxide and catalyzes the regioselective and stereoselective 6/6/6-tricyclic ring formation. The cytochrome P450 monooxygenase ntnM may then hydroxylate C1'. The polypeptide is FAD-dependent monooxygenase ntnJ (Nectria sp).